We begin with the raw amino-acid sequence, 287 residues long: 4-hydroxybenzoate octaprenyltransferase (287 aa).

Helical transmembrane passes span 21-41 (VGIF…AKGA), 44-64 (FKIA…GCIV), 91-111 (VTEA…LVLL), 112-132 (LNRL…VYPF), 139-159 (LPQL…FAAT), 160-180 (VGHV…WPIV), 211-231 (LMIG…GWYL), 235-255 (YWFY…QFLI), and 263-283 (CFAA…GILL).

The protein belongs to the UbiA prenyltransferase family. The cofactor is Mg(2+).

The protein resides in the cell inner membrane. The enzyme catalyses all-trans-octaprenyl diphosphate + 4-hydroxybenzoate = 4-hydroxy-3-(all-trans-octaprenyl)benzoate + diphosphate. Its pathway is cofactor biosynthesis; ubiquinone biosynthesis. Catalyzes the prenylation of para-hydroxybenzoate (PHB) with an all-trans polyprenyl group. Mediates the second step in the final reaction sequence of ubiquinone-8 (UQ-8) biosynthesis, which is the condensation of the polyisoprenoid side chain with PHB, generating the first membrane-bound Q intermediate 3-octaprenyl-4-hydroxybenzoate. This is 4-hydroxybenzoate octaprenyltransferase from Coxiella burnetii (strain CbuG_Q212) (Coxiella burnetii (strain Q212)).